Reading from the N-terminus, the 547-residue chain is Chaperonin GroEL 2 (547 aa).

ATP is bound by residues 30 to 33 (TLGP), Lys-51, 87 to 91 (DGTTT), Gly-415, 479 to 481 (NAA), and Asp-495. The tract at residues 525–547 (PKEESAAPAGGGMGGMGGMGGMM) is disordered. Over residues 533-547 (AGGGMGGMGGMGGMM) the composition is skewed to gly residues.

It belongs to the chaperonin (HSP60) family. Forms a cylinder of 14 subunits composed of two heptameric rings stacked back-to-back. Interacts with the co-chaperonin GroES.

It localises to the cytoplasm. The catalysed reaction is ATP + H2O + a folded polypeptide = ADP + phosphate + an unfolded polypeptide.. Functionally, together with its co-chaperonin GroES, plays an essential role in assisting protein folding. The GroEL-GroES system forms a nano-cage that allows encapsulation of the non-native substrate proteins and provides a physical environment optimized to promote and accelerate protein folding. The polypeptide is Chaperonin GroEL 2 (Anaeromyxobacter dehalogenans (strain 2CP-C)).